Consider the following 146-residue polypeptide: Angiogenin (146 aa).

An N-terminal signal peptide occupies residues 1–24; the sequence is MVMGLGLFLLVFMLGLGLTPPTLA. Gln-25 carries the post-translational modification Pyrrolidone carboxylic acid. The active-site Proton acceptor is the His-37. Arg-45 provides a ligand contact to tRNA. Disulfide bonds link Cys-50–Cys-105, Cys-63–Cys-116, and Cys-81–Cys-131. Residues 55 to 59 carry the Nucleolar localization signal motif; it reads RRRHL. TRNA is bound by residues Cys-105 and Ile-127. His-138 serves as the catalytic Proton donor.

The protein belongs to the pancreatic ribonuclease family. Homodimer. Interacts with RNH1; inhibiting ANG ribonuclease activity. Interacts with PCNA.

The protein resides in the secreted. The protein localises to the nucleus. Its subcellular location is the nucleolus. It localises to the cytoplasm. It is found in the stress granule. Its activity is regulated as follows. Has weak tRNA ribonuclease activity by itself due to partial autoinhibition by its C-terminus, which folds into a short alpha-helix that partially occludes the substrate-binding site. In absence of stress, the ribonuclease activity is inhibited by RNH1 in the cytoplasm. In response to stress, dissociates from RNH1 in the cytoplasm and associates with cytoplasmic ribosomes with vacant A-sites: ribosomes directly activate the tRNA ribonuclease activity of ANG by refolding the C-terminal alpha-helix. In response to stress, the angiogenic activity of ANG is inhibited by RNH1 in the nucleus. Its function is as follows. Secreted ribonuclease that can either promote or restrict cell proliferation of target cells, depending on the context. Endocytosed in target cells via its receptor PLXNB2 and translocates to the cytoplasm or nucleus. Under stress conditions, localizes to the cytoplasm and promotes the assembly of stress granules (SGs): specifically cleaves a subset of tRNAs within anticodon loops to produce tRNA-derived stress-induced fragments (tiRNAs), resulting in translation repression and inhibition of cell proliferation. tiRNas also prevent formation of apoptosome, thereby promoting cell survival. Preferentially cleaves RNAs between a pyrimidine and an adenosine residue, suggesting that it cleaves the anticodon loop of tRNA(Ala) (32-UUAGCAU-38) after positions 33 and 36. Cleaves a subset of tRNAs, including tRNA(Ala), tRNA(Glu), tRNA(Gly), tRNA(Lys), tRNA(Val), tRNA(His), tRNA(Asp) and tRNA(Sec). Under growth conditions and in differentiated cells, translocates to the nucleus and stimulates ribosomal RNA (rRNA) transcription, including that containing the initiation site sequences of 45S rRNA, thereby promoting cell growth and proliferation. Angiogenin induces vascularization of normal and malignant tissues via its ability to promote rRNA transcription. Involved in hematopoietic stem and progenitor cell (HSPC) growth and survival by promoting rRNA transcription in growth conditions and inhibiting translation in response to stress, respectively. Mediates the crosstalk between myeloid and intestinal epithelial cells to protect the intestinal epithelial barrier integrity: secreted by myeloid cells and promotes intestinal epithelial cells proliferation and survival. Also mediates osteoclast-endothelial cell crosstalk in growing bone: produced by osteoclasts and protects the neighboring vascular cells against senescence by promoting rRNA transcription. This is Angiogenin (ANG) from Macaca mulatta (Rhesus macaque).